Reading from the N-terminus, the 349-residue chain is MVSIRPSVRHTPAYVPGEQPQTNDFIKLNTNENPYDPPAQVLAAVAAELPKVRLYPDPVSTQLRQAAADLYGVDLNQVLAGNGSDDILNIVVRTFVDPGETVAFLDLTYSLYETIASVHGAKVQKIATDANFDLTGPVICPEAKLIFLASPNPPKGKHLNREFLWQTCAQAEGVVVIDEAYGDFSDEDHWDFLQEFDNVIISRTLSKSYSLAGMRVGLAIAAPALIEEMDKVRDSYNLDRLAQVLGTAALRNQAEFVPLWEKVRHTRTRLMEQLAELDFQVCPSDANFVFAAPRWMAAADLYQALKEKKILVRYFNHPRITDYLRITVGTDGEIDQLLLAIASLKGSLG.

The disordered stretch occupies residues 1–22; sequence MVSIRPSVRHTPAYVPGEQPQT. Lysine 207 carries the N6-(pyridoxal phosphate)lysine modification.

Belongs to the class-II pyridoxal-phosphate-dependent aminotransferase family. Histidinol-phosphate aminotransferase subfamily. Homodimer. Pyridoxal 5'-phosphate serves as cofactor.

It carries out the reaction L-histidinol phosphate + 2-oxoglutarate = 3-(imidazol-4-yl)-2-oxopropyl phosphate + L-glutamate. It participates in amino-acid biosynthesis; L-histidine biosynthesis; L-histidine from 5-phospho-alpha-D-ribose 1-diphosphate: step 7/9. The chain is Histidinol-phosphate aminotransferase (hisC) from Synechocystis sp. (strain ATCC 27184 / PCC 6803 / Kazusa).